The chain runs to 271 residues: Phosphate import ATP-binding protein PstB 3 (271 aa).

In terms of domain architecture, ABC transporter spans 20–266; sequence LRVEGLGFYY…PQETQTRDYV (247 aa). 52-59 is an ATP binding site; that stretch reads GPSGCGKS.

Belongs to the ABC transporter superfamily. Phosphate importer (TC 3.A.1.7) family. In terms of assembly, the complex is composed of two ATP-binding proteins (PstB), two transmembrane proteins (PstC and PstA) and a solute-binding protein (PstS).

The protein resides in the cell inner membrane. It carries out the reaction phosphate(out) + ATP + H2O = ADP + 2 phosphate(in) + H(+). Its function is as follows. Part of the ABC transporter complex PstSACB involved in phosphate import. Responsible for energy coupling to the transport system. In Synechocystis sp. (strain ATCC 27184 / PCC 6803 / Kazusa), this protein is Phosphate import ATP-binding protein PstB 3.